A 454-amino-acid chain; its full sequence is Chromosomal replication initiator protein DnaA (454 aa).

Residues 1–79 (MSLCLWKQCL…NSPFIKFKVY (79 aa)) are domain I, interacts with DnaA modulators. The interval 79-117 (YQTSKEKKFKKNILQKIQNLNAKPIWDKIPIFKKSSHRS) is domain II. Positions 118-334 (NINKKHSFEN…GALNRVIVNA (217 aa)) are domain III, AAA+ region. ATP-binding residues include Gly-162, Gly-164, Lys-165, and Thr-166. Residues 335–454 (NFTHRSITVE…FSNLIRTLSV (120 aa)) are domain IV, binds dsDNA.

It belongs to the DnaA family. Oligomerizes as a right-handed, spiral filament on DNA at oriC.

It localises to the cytoplasm. Plays an essential role in the initiation and regulation of chromosomal replication. ATP-DnaA binds to the origin of replication (oriC) to initiate formation of the DNA replication initiation complex once per cell cycle. Binds the DnaA box (a 9 base pair repeat at the origin) and separates the double-stranded (ds)DNA. Forms a right-handed helical filament on oriC DNA; dsDNA binds to the exterior of the filament while single-stranded (ss)DNA is stabiized in the filament's interior. The ATP-DnaA-oriC complex binds and stabilizes one strand of the AT-rich DNA unwinding element (DUE), permitting loading of DNA polymerase. After initiation quickly degrades to an ADP-DnaA complex that is not apt for DNA replication. Binds acidic phospholipids. In Buchnera aphidicola subsp. Schizaphis graminum (strain Sg), this protein is Chromosomal replication initiator protein DnaA.